Here is a 51-residue protein sequence, read N- to C-terminus: Large ribosomal subunit protein eL39 (51 aa).

Belongs to the eukaryotic ribosomal protein eL39 family.

The protein is Large ribosomal subunit protein eL39 (rpl39e) of Aeropyrum pernix (strain ATCC 700893 / DSM 11879 / JCM 9820 / NBRC 100138 / K1).